The sequence spans 211 residues: Somatotropin (211 aa).

An N-terminal signal peptide occupies residues 1 to 23 (MASGFLLCPVLLAVFFMSPVEVG). A Zn(2+)-binding site is contributed by H40. A disulfide bridge connects residues C73 and C184. E193 lines the Zn(2+) pocket. A disulfide bridge links C201 with C209.

Belongs to the somatotropin/prolactin family.

It is found in the secreted. In terms of biological role, growth hormone plays an important role in growth control and is involved in the regulation of several anabolic processes. Implicated as an osmoregulatory substance important for seawater adaptation. This is Somatotropin (gh) from Lepisosteus osseus (Long-nosed gar).